We begin with the raw amino-acid sequence, 642 residues long: Regulator of MON1-CCZ1 complex (642 aa).

The Mic1 domain occupies 462–616; it reads RPYTESILML…KLYETLSFPK (155 aa).

The protein belongs to the RMC1 family. In terms of assembly, component of the Mon1-Ccz1 guanyl-nucleotide exchange factor complex made up of Mon1, Ccz1 and Bulli; the interaction of Bulli with the Mon1-Ccz1 heterodimer is mediated via the C-terminal Mic1 domain of Bulli. Mon1 and Ccz1 form a stable complex which displays Rab7 GEF activity with or without Bulli; GEF activity is enhanced by Bulli possibly by improving membrane association of the complex.

It localises to the late endosome. Positive regulator of the Rab7 guanyl-nucleotide exchange activity of the Mon1-Ccz1 complex, possibly by enhancing its endosomal membrane association. As part of the Mon1-Ccz1 complex involved in endolysosomal biogenesis possibly by mediating Rab conversion, the replacement of Rab5 with Rab7 during late endosome maturation. This chain is Regulator of MON1-CCZ1 complex, found in Drosophila melanogaster (Fruit fly).